The sequence spans 318 residues: Methionyl-tRNA formyltransferase (318 aa).

Serine 112–proline 115 is a binding site for (6S)-5,6,7,8-tetrahydrofolate.

The protein belongs to the Fmt family.

It catalyses the reaction L-methionyl-tRNA(fMet) + (6R)-10-formyltetrahydrofolate = N-formyl-L-methionyl-tRNA(fMet) + (6S)-5,6,7,8-tetrahydrofolate + H(+). Functionally, attaches a formyl group to the free amino group of methionyl-tRNA(fMet). The formyl group appears to play a dual role in the initiator identity of N-formylmethionyl-tRNA by promoting its recognition by IF2 and preventing the misappropriation of this tRNA by the elongation apparatus. The sequence is that of Methionyl-tRNA formyltransferase from Shewanella baltica (strain OS195).